We begin with the raw amino-acid sequence, 312 residues long: MDYDIKFTWDKNQFLDQEIRIPKYTLPWDFKSSPFDKDFENQEMEYVKQFFQNYENAVNYVKKNEIGKIAALNFPLGEKDEYMVNSKLLDFLFILDDYIYESRNYEEDYVDNLMDRSSKSHDPFGREIWRLFDEYYRVGVKESVDLLIRDFEYWSRSAIKTNKYKSLNSSLSIEDYFNSRHGDFGMTITASSCTSTLYVENEIRESKNFKKFFKYFELCNLMINDCGSFKMEINEILLTNFVKVRAIQLGSIDLALKYCVGLLNKYIIKVDKYSTKLEQQYPNHSHLKKYIYTLKTFTAGHNKGYGHANRYN.

Positions 96–101 (DDYIYE) match the DDxx(x)D/E motif motif. An NDxxSxxxD/E motif motif is present at residues 224–232 (NDCGSFKME).

Belongs to the terpene synthase family.

It catalyses the reaction (2E,6E)-farnesyl diphosphate + H2O = discoidol + diphosphate. It participates in sesquiterpene biosynthesis. In terms of biological role, terpene synthase; part of the gene cluster that mediates the biosynthesis of the trisnorsesquiterpene discodiene which has a function during later stages of multicellular development, during the transition from fingers to Mexican hats. The terpene synthase tps8 converts its substrate farnesyl diphosphate (FDP) into the bicyclic sesquiterpene alcohol discoidol. The cytochrome P450 monooxygenase cyp521A1 then catalyzes the oxidative degradation of discoidol to form the trisnorsesquiterpene discodiene. This is Terpene synthase 8 from Dictyostelium discoideum (Social amoeba).